The sequence spans 187 residues: Dihydrofolate reductase (187 aa).

A DHFR domain is found at 4–185; sequence PLNCIVAVSQ…IKYKFEVYEK (182 aa). Residues A10 and 16–22 contribute to the NADP(+) site; that span reads GIGKNGD. 31-36 contributes to the substrate binding site; it reads EFKYFQ. K33 is subject to N6-acetyllysine; alternate. K33 carries the post-translational modification N6-succinyllysine; alternate. 55–57 provides a ligand contact to NADP(+); it reads RKT. R71 is a binding site for substrate. NADP(+)-binding positions include 77-79 and 117-124; these read SRE and GGSSVYQE.

The protein belongs to the dihydrofolate reductase family. As to quaternary structure, homodimer.

It localises to the mitochondrion. The protein localises to the cytoplasm. It carries out the reaction (6S)-5,6,7,8-tetrahydrofolate + NADP(+) = 7,8-dihydrofolate + NADPH + H(+). It participates in cofactor biosynthesis; tetrahydrofolate biosynthesis; 5,6,7,8-tetrahydrofolate from 7,8-dihydrofolate: step 1/1. Key enzyme in folate metabolism. Contributes to the de novo mitochondrial thymidylate biosynthesis pathway. Catalyzes an essential reaction for de novo glycine and purine synthesis, and for DNA precursor synthesis. Binds its own mRNA. This chain is Dihydrofolate reductase (Dhfr), found in Rattus norvegicus (Rat).